The sequence spans 550 residues: Chaperonin GroEL (550 aa).

ATP contacts are provided by residues T30–P33, K51, D87–T91, G415, N479–A481, and D495.

The protein belongs to the chaperonin (HSP60) family. Forms a cylinder of 14 subunits composed of two heptameric rings stacked back-to-back. Interacts with the co-chaperonin GroES.

The protein localises to the cytoplasm. The catalysed reaction is ATP + H2O + a folded polypeptide = ADP + phosphate + an unfolded polypeptide.. Together with its co-chaperonin GroES, plays an essential role in assisting protein folding. The GroEL-GroES system forms a nano-cage that allows encapsulation of the non-native substrate proteins and provides a physical environment optimized to promote and accelerate protein folding. The sequence is that of Chaperonin GroEL from Aromatoleum aromaticum (strain DSM 19018 / LMG 30748 / EbN1) (Azoarcus sp. (strain EbN1)).